Reading from the N-terminus, the 497-residue chain is Keratin, type II cytoskeletal 8 (497 aa).

The segment at 2-108 (TSYQRTVTVR…DPRIGQVRLE (107 aa)) is head. The coil 1A stretch occupies residues 109-149 (EKEQIKTLNNQFAGFIDKVRYLEQQNKLLETKWQLLQNQTT). One can recognise an IF rod domain in the interval 109-421 (EKEQIKTLNN…KLLEGEESRL (313 aa)). Residues 145–162 (QNQTTPSRSNLDSMFEAY) are linker 1. Residues 163–254 (ISNLRRQLDT…QIYDEEIREL (92 aa)) are coil 1B. The linker 12 stretch occupies residues 255 to 278 (QTQIQDTSVIVQMDNNRQLDLDNI). The tract at residues 279–417 (IAEVRAQYED…ATYRKLLEGE (139 aa)) is coil 2. Residues 418 to 497 (ESRLASGIQA…VSERSNIVKE (80 aa)) form a tail region.

The protein belongs to the intermediate filament family. As to quaternary structure, heterotetramer of two type I and two type II keratins. Keratin-8 associates with keratin-18. As to expression, expressed in skin.

The protein resides in the cytoplasm. It localises to the nucleus. It is found in the nucleoplasm. Its subcellular location is the nucleus matrix. Its function is as follows. Together with KRT19, helps to link the contractile apparatus to dystrophin at the costameres of striated muscle. This is Keratin, type II cytoskeletal 8 from Protopterus aethiopicus (Marbled lungfish).